Reading from the N-terminus, the 138-residue chain is MAKPIPRIGSRKNGRIGSRKSGRRIPKGVIHVQASFNNTIVTVTDVRGRVVSWSSAGTCGFRGTRRGTPFAAQTAAGNAIRTVMDQGMQRAEVMIKGPGLGRDAALRAIRRSGLLLSFVRDVTPMPHNGCRPPKKRRV.

The segment at 1–23 (MAKPIPRIGSRKNGRIGSRKSGR) is disordered. Over residues 9–23 (GSRKNGRIGSRKSGR) the composition is skewed to basic residues.

The protein belongs to the universal ribosomal protein uS11 family. As to quaternary structure, part of the 30S ribosomal subunit.

It localises to the plastid. Its subcellular location is the chloroplast. The polypeptide is Small ribosomal subunit protein uS11c (Buxus microphylla (Littleleaf boxwood)).